Here is a 257-residue protein sequence, read N- to C-terminus: Snake venom serine protease KN8 (257 aa).

Positions 1–18 (MVLIRVLANLLILQLSYA) are cleaved as a signal peptide. Residues 19 to 24 (QKSSEL) constitute a propeptide that is removed on maturation. Residues 25 to 248 (VVGGLPCNIN…HLDWIKSIIA (224 aa)) enclose the Peptidase S1 domain. Intrachain disulfides connect C31–C162, C49–C65, C141–C209, C173–C188, and C199–C224. Residue H64 is the Charge relay system of the active site. Residue N102 is glycosylated (N-linked (GlcNAc...) asparagine). The Charge relay system role is filled by D109. N120 and N121 each carry an N-linked (GlcNAc...) asparagine glycan. S203 acts as the Charge relay system in catalysis.

The protein belongs to the peptidase S1 family. Snake venom subfamily. In terms of assembly, monomer. As to expression, expressed by the venom gland.

It localises to the secreted. Snake venom serine protease that may act in the hemostasis system of the prey. The chain is Snake venom serine protease KN8 from Trimeresurus stejnegeri (Chinese green tree viper).